The primary structure comprises 112 residues: Probable small nuclear ribonucleoprotein Sm D2 (112 aa).

Basic and acidic residues predominate over residues 1–15 (MSRMNDETMEDKPDD). Residues 1–23 (MSRMNDETMEDKPDDSNGPLSIL) are disordered. In terms of domain architecture, Sm spans 20 to 106 (LSILMDSVNN…VILVLKNPLG (87 aa)).

It belongs to the snRNP core protein family.

The protein localises to the nucleus. It is found in the cytoplasm. The protein resides in the cytosol. In terms of biological role, plays a role in pre-mRNA splicing as a core component of the spliceosomal U1, U2, U4 and U5 small nuclear ribonucleoproteins (snRNPs), the building blocks of the spliceosome. The protein is Probable small nuclear ribonucleoprotein Sm D2 (snrpd2) of Dictyostelium discoideum (Social amoeba).